A 164-amino-acid polypeptide reads, in one-letter code: Protein SprT (164 aa).

The region spanning 14-156 is the SprT-like domain; sequence QLAESFFKRP…LCRRCRQTLV (143 aa). His-69 lines the Zn(2+) pocket. Residue Glu-70 is part of the active site. A Zn(2+)-binding site is contributed by His-73.

It belongs to the SprT family. Zn(2+) is required as a cofactor.

The protein resides in the cytoplasm. The protein is Protein SprT of Pseudomonas fluorescens (strain ATCC BAA-477 / NRRL B-23932 / Pf-5).